Reading from the N-terminus, the 354-residue chain is uncharacterized protein (354 aa).

The first 21 residues, 1–21 (MFQKKTYAVFLILLLMMFTAA), serve as a signal peptide directing secretion. The N-palmitoyl cysteine moiety is linked to residue cysteine 22. The S-diacylglycerol cysteine moiety is linked to residue cysteine 22.

It is found in the cell membrane. The protein localises to the membrane raft. This is an uncharacterized protein from Bacillus subtilis (strain 168).